The following is a 583-amino-acid chain: CD166 antigen (583 aa).

Positions 1–27 (MASKVSPSCRLVFCLLISAAVLRPGLG) are cleaved as a signal peptide. Ig-like V-type domains follow at residues 28-120 (WYTV…TEDN) and 125-234 (PTLV…KTIY). Residues 28 to 527 (WYTVNSAYGD…NREKVNDQAK (500 aa)) lie on the Extracellular side of the membrane. 2 disulfide bridges follow: Cys43–Cys113 and Cys157–Cys220. 8 N-linked (GlcNAc...) asparagine glycosylation sites follow: Asn95, Asn167, Asn265, Asn306, Asn361, Asn457, Asn480, and Asn499. 3 consecutive Ig-like C2-type domains span residues 245 to 328 (PTEQ…TTIT), 333 to 409 (DLSL…ESLT), and 416 to 501 (PQIK…LNVS). 3 cysteine pairs are disulfide-bonded: Cys270–Cys313, Cys354–Cys392, and Cys435–Cys485. Residues 528–549 (LIVGIVVGLLLAALVAGVVYWL) form a helical membrane-spanning segment. Topologically, residues 550-583 (YMKKSKTASKHVNKDLGNMEENKKLEENNHKTEA) are cytoplasmic. Residues 562-583 (NKDLGNMEENKKLEENNHKTEA) form a disordered region. Residues 569-583 (EENKKLEENNHKTEA) show a composition bias toward basic and acidic residues.

Homodimer. Interacts (via extracellular domain) with CD6 (via extracellular domain). Homodimerization and interaction with CD6 involve the same region and cannot occur simultaneously. The affinity for CD6 is much higher than the affinity for self-association. Interacts (via glycosylated extracellular domain) with LGALS1 and LGALS3. Interaction with LGALS1 or LGALS3 inhibits interaction with CD6. In terms of processing, glycosylated. As to expression, detected on brain motor neurons, in differentiating retinal ganglion cells and in adult retina. Detected on leukocytes and on lymphatic endothelial cells. Detected in spleen B cells and T-cells (at protein level). Detected in adult brain and embryonic spinal cord. Expressed at high levels in the brain, and lung, and at lower levels in the liver, and the kidney, as well as by activated leukocytes.

The protein localises to the cell membrane. The protein resides in the cell projection. It localises to the axon. It is found in the dendrite. Its function is as follows. Cell adhesion molecule that mediates both heterotypic cell-cell contacts via its interaction with CD6, as well as homotypic cell-cell contacts. Promotes T-cell activation and proliferation via its interactions with CD6. Contributes to the formation and maturation of the immunological synapse via its interactions with CD6. Mediates homotypic interactions with cells that express ALCAM. Mediates attachment of dendritic cells onto endothelial cells via homotypic interaction. Inhibits endothelial cell migration and promotes endothelial tube formation via homotypic interactions. Required for normal organization of the lymph vessel network. Required for normal hematopoietic stem cell engraftment in the bone marrow. Plays a role in hematopoiesis; required for normal numbers of hematopoietic stem cells in bone marrow. Promotes in vitro osteoblast proliferation and differentiation. Promotes neurite extension, axon growth and axon guidance; axons grow preferentially on surfaces that contain ALCAM. Mediates outgrowth and pathfinding for retinal ganglion cell axons. In Mus musculus (Mouse), this protein is CD166 antigen (Alcam).